A 161-amino-acid chain; its full sequence is Peptidyl-prolyl cis-trans isomerase-like 3 (161 aa).

At S2 the chain carries N-acetylserine. The 153-residue stretch at 2 to 154 (SVTLHTDVGD…NDVHIKDITI (153 aa)) folds into the PPIase cyclophilin-type domain. R61 bears the Omega-N-methylarginine mark.

It belongs to the cyclophilin-type PPIase family. PPIL3 subfamily. In terms of assembly, identified in the spliceosome C complex. Ubiquitous. Detected at low levels.

It carries out the reaction [protein]-peptidylproline (omega=180) = [protein]-peptidylproline (omega=0). Functionally, PPIases accelerate the folding of proteins. It catalyzes the cis-trans isomerization of proline imidic peptide bonds in oligopeptides. May be involved in pre-mRNA splicing. In Homo sapiens (Human), this protein is Peptidyl-prolyl cis-trans isomerase-like 3 (PPIL3).